The following is a 227-amino-acid chain: Enolase-phosphatase E1 (227 aa).

It belongs to the HAD-like hydrolase superfamily. MasA/MtnC family. Monomer. It depends on Mg(2+) as a cofactor.

It carries out the reaction 5-methylsulfanyl-2,3-dioxopentyl phosphate + H2O = 1,2-dihydroxy-5-(methylsulfanyl)pent-1-en-3-one + phosphate. It participates in amino-acid biosynthesis; L-methionine biosynthesis via salvage pathway; L-methionine from S-methyl-5-thio-alpha-D-ribose 1-phosphate: step 3/6. Its pathway is amino-acid biosynthesis; L-methionine biosynthesis via salvage pathway; L-methionine from S-methyl-5-thio-alpha-D-ribose 1-phosphate: step 4/6. Its function is as follows. Bifunctional enzyme that catalyzes the enolization of 2,3-diketo-5-methylthiopentyl-1-phosphate (DK-MTP-1-P) into the intermediate 2-hydroxy-3-keto-5-methylthiopentenyl-1-phosphate (HK-MTPenyl-1-P), which is then dephosphorylated to form the acireductone 1,2-dihydroxy-3-keto-5-methylthiopentene (DHK-MTPene). This is Enolase-phosphatase E1 from Pseudomonas syringae pv. syringae (strain B728a).